Here is a 167-residue protein sequence, read N- to C-terminus: NADH-quinone oxidoreductase subunit E (167 aa).

Residues C91, C96, C132, and C136 each contribute to the [2Fe-2S] cluster site.

The protein belongs to the complex I 24 kDa subunit family. [2Fe-2S] cluster serves as cofactor.

It catalyses the reaction a quinone + NADH + 5 H(+)(in) = a quinol + NAD(+) + 4 H(+)(out). In terms of biological role, NDH-1 shuttles electrons from NADH, via FMN and iron-sulfur (Fe-S) centers, to quinones in the respiratory chain. Couples the redox reaction to proton translocation (for every two electrons transferred, four hydrogen ions are translocated across the cytoplasmic membrane), and thus conserves the redox energy in a proton gradient. The sequence is that of NADH-quinone oxidoreductase subunit E (nuoE) from Rickettsia bellii (strain RML369-C).